The following is an 89-amino-acid chain: Small ribosomal subunit protein bS20 (89 aa).

Residues 1–22 (MANTASARKRIRQNERRRERNV) are disordered. Basic and acidic residues predominate over residues 12-22 (RQNERRRERNV).

It belongs to the bacterial ribosomal protein bS20 family.

Binds directly to 16S ribosomal RNA. The chain is Small ribosomal subunit protein bS20 from Gluconobacter oxydans (strain 621H) (Gluconobacter suboxydans).